The following is a 407-amino-acid chain: Phosphopentomutase (407 aa).

D10, D306, H311, D347, H348, and H359 together coordinate Mn(2+).

Belongs to the phosphopentomutase family. Mn(2+) serves as cofactor.

It localises to the cytoplasm. It catalyses the reaction 2-deoxy-alpha-D-ribose 1-phosphate = 2-deoxy-D-ribose 5-phosphate. The enzyme catalyses alpha-D-ribose 1-phosphate = D-ribose 5-phosphate. It functions in the pathway carbohydrate degradation; 2-deoxy-D-ribose 1-phosphate degradation; D-glyceraldehyde 3-phosphate and acetaldehyde from 2-deoxy-alpha-D-ribose 1-phosphate: step 1/2. Functionally, isomerase that catalyzes the conversion of deoxy-ribose 1-phosphate (dRib-1-P) and ribose 1-phosphate (Rib-1-P) to deoxy-ribose 5-phosphate (dRib-5-P) and ribose 5-phosphate (Rib-5-P), respectively. The chain is Phosphopentomutase from Cronobacter sakazakii (strain ATCC BAA-894) (Enterobacter sakazakii).